The primary structure comprises 245 residues: Pyridoxine 5'-phosphate synthase (245 aa).

Position 7 (asparagine 7) interacts with 3-amino-2-oxopropyl phosphate. A 1-deoxy-D-xylulose 5-phosphate-binding site is contributed by aspartate 9–histidine 10. 3-amino-2-oxopropyl phosphate is bound at residue arginine 18. Histidine 43 (proton acceptor) is an active-site residue. Arginine 45 and histidine 50 together coordinate 1-deoxy-D-xylulose 5-phosphate. Residue glutamate 70 is the Proton acceptor of the active site. Threonine 100 provides a ligand contact to 1-deoxy-D-xylulose 5-phosphate. Histidine 190 (proton donor) is an active-site residue. Residues glycine 191 and glycine 212–histidine 213 each bind 3-amino-2-oxopropyl phosphate.

This sequence belongs to the PNP synthase family. As to quaternary structure, homooctamer; tetramer of dimers.

Its subcellular location is the cytoplasm. The catalysed reaction is 3-amino-2-oxopropyl phosphate + 1-deoxy-D-xylulose 5-phosphate = pyridoxine 5'-phosphate + phosphate + 2 H2O + H(+). It functions in the pathway cofactor biosynthesis; pyridoxine 5'-phosphate biosynthesis; pyridoxine 5'-phosphate from D-erythrose 4-phosphate: step 5/5. Functionally, catalyzes the complicated ring closure reaction between the two acyclic compounds 1-deoxy-D-xylulose-5-phosphate (DXP) and 3-amino-2-oxopropyl phosphate (1-amino-acetone-3-phosphate or AAP) to form pyridoxine 5'-phosphate (PNP) and inorganic phosphate. The polypeptide is Pyridoxine 5'-phosphate synthase (Prochlorococcus marinus (strain NATL1A)).